Consider the following 183-residue polypeptide: Inner membrane-spanning protein YciB (183 aa).

5 consecutive transmembrane segments (helical) span residues 22–44 (VQAA…RILF), 53–73 (IVGL…DLAF), 76–96 (WKVT…QYVF), 121–141 (LGWA…SQLF), and 153–173 (GFTG…YPYI).

This sequence belongs to the YciB family.

It localises to the cell inner membrane. In terms of biological role, plays a role in cell envelope biogenesis, maintenance of cell envelope integrity and membrane homeostasis. This chain is Inner membrane-spanning protein YciB, found in Haemophilus ducreyi (strain 35000HP / ATCC 700724).